Reading from the N-terminus, the 166-residue chain is Cyclic pyranopterin monophosphate synthase (166 aa).

Substrate-binding positions include 83–85 and 121–122; these read LCH and ME. Residue Asp-136 is part of the active site.

This sequence belongs to the MoaC family. Homohexamer; trimer of dimers.

It catalyses the reaction (8S)-3',8-cyclo-7,8-dihydroguanosine 5'-triphosphate = cyclic pyranopterin phosphate + diphosphate. The protein operates within cofactor biosynthesis; molybdopterin biosynthesis. In terms of biological role, catalyzes the conversion of (8S)-3',8-cyclo-7,8-dihydroguanosine 5'-triphosphate to cyclic pyranopterin monophosphate (cPMP). This chain is Cyclic pyranopterin monophosphate synthase, found in Syntrophobacter fumaroxidans (strain DSM 10017 / MPOB).